The sequence spans 185 residues: HTH-type transcriptional regulator Hpr (185 aa).

The HTH marR-type domain occupies 13–157; the sequence is AMIFSQRIAQ…LIAILRNIYG (145 aa). A DNA-binding region (H-T-H motif) is located at residues 63-86; that stretch reads ISEIAKFGVMHVSTAFNFSKKLEE.

In terms of assembly, homodimer.

Negative regulator of protease production and sporulation. The polypeptide is HTH-type transcriptional regulator Hpr (Bacillus cereus (strain G9842)).